The following is a 234-amino-acid chain: Peptidase E (234 aa).

Residues serine 123, aspartate 138, and histidine 160 each act as charge relay system in the active site.

This sequence belongs to the peptidase S51 family.

It localises to the cytoplasm. The catalysed reaction is Dipeptidase E catalyzes the hydrolysis of dipeptides Asp-|-Xaa. It does not act on peptides with N-terminal Glu, Asn or Gln, nor does it cleave isoaspartyl peptides.. Its function is as follows. Hydrolyzes dipeptides containing N-terminal aspartate residues. May play a role in allowing the cell to use peptide aspartate to spare carbon otherwise required for the synthesis of the aspartate family of amino acids. The sequence is that of Peptidase E from Actinobacillus pleuropneumoniae serotype 3 (strain JL03).